A 352-amino-acid polypeptide reads, in one-letter code: Pollen-specific protein SF21 (352 aa).

Belongs to the NDRG family. In terms of tissue distribution, pollen.

This chain is Pollen-specific protein SF21 (SF21), found in Helianthus annuus (Common sunflower).